Here is a 222-residue protein sequence, read N- to C-terminus: UPF0502 protein XCC4136 (222 aa).

This sequence belongs to the UPF0502 family.

This Xanthomonas campestris pv. campestris (strain ATCC 33913 / DSM 3586 / NCPPB 528 / LMG 568 / P 25) protein is UPF0502 protein XCC4136.